Here is a 210-residue protein sequence, read N- to C-terminus: FMN-dependent NADH:quinone oxidoreductase 9 (210 aa).

FMN contacts are provided by residues S10 and 16 to 18 (SAS).

The protein belongs to the azoreductase type 1 family. As to quaternary structure, homodimer. Requires FMN as cofactor.

It carries out the reaction 2 a quinone + NADH + H(+) = 2 a 1,4-benzosemiquinone + NAD(+). It catalyses the reaction N,N-dimethyl-1,4-phenylenediamine + anthranilate + 2 NAD(+) = 2-(4-dimethylaminophenyl)diazenylbenzoate + 2 NADH + 2 H(+). Functionally, quinone reductase that provides resistance to thiol-specific stress caused by electrophilic quinones. In terms of biological role, also exhibits azoreductase activity. Catalyzes the reductive cleavage of the azo bond in aromatic azo compounds to the corresponding amines. In Burkholderia lata (strain ATCC 17760 / DSM 23089 / LMG 22485 / NCIMB 9086 / R18194 / 383), this protein is FMN-dependent NADH:quinone oxidoreductase 9.